Consider the following 192-residue polypeptide: Succinate dehydrogenase cytochrome b560 subunit, mitochondrial (192 aa).

Residues 1–27 (MFGRTLNTFTSRNAPLVRNFDKFIVNN) constitute a mitochondrion transit peptide. The Mitochondrial matrix portion of the chain corresponds to 48–83 (YSTQAKKPFTITEKRIDELKTPYQPTSPHLTIYKFP). Residues 84–113 (LPAVMSIMHRATGICLALGITGLAGVTLFA) form a helical membrane-spanning segment. Residues 114–131 (PHDAIHYIQLLHTQYPAL) are Mitochondrial intermembrane-facing. A helical membrane pass occupies residues 132 to 156 (VYPAKFAVALPLTYHFCTGVRHIIW). His146 contributes to the heme b binding site. The Mitochondrial matrix segment spans residues 157–164 (DETVKGLS). The chain crosses the membrane as a helical span at residues 165-186 (ISQIESSGKVLLAVVAVLSTIF). The Mitochondrial intermembrane segment spans residues 187 to 189 (TFV).

Belongs to the cytochrome b560 family. In terms of assembly, component of complex II composed of four subunits: the flavoprotein (FP) sdha, iron-sulfur protein (IP) sdhb, and a cytochrome b560 composed of sdhc and sdhd. The cofactor is heme b.

The protein resides in the mitochondrion inner membrane. Its pathway is carbohydrate metabolism; tricarboxylic acid cycle. Membrane-anchoring subunit of succinate dehydrogenase (SDH) that is involved in complex II of the mitochondrial electron transport chain and is responsible for transferring electrons from succinate to ubiquinone (coenzyme Q). The polypeptide is Succinate dehydrogenase cytochrome b560 subunit, mitochondrial (sdhC) (Dictyostelium discoideum (Social amoeba)).